A 452-amino-acid chain; its full sequence is BUB3-interacting and GLEBS motif-containing protein ZNF207 (452 aa).

A microtubule-binding region region spans residues 1 to 92; it reads MGRKKKKQLK…EGIPEKDMEE (92 aa). 2 C2H2-type zinc fingers span residues 11-34 and 35-58; these read PWCW…KAKH and FKCH…MQVH. Disordered stretches follow at residues 99-131 and 298-330; these read QKTQ…SFQQ and STMS…TSAT. Over residues 113–123 the composition is skewed to acidic residues; that stretch reads DDSDYDDDDDT. Residues 329 to 361 are GLEBS; it reads ATSKLVHPDEDISLEEKRAQLPKYQRNLPRPGQ.

In terms of assembly, interacts (via GLEBS region) with bub3.

The protein localises to the nucleus. Its subcellular location is the chromosome. The protein resides in the centromere. It localises to the kinetochore. It is found in the cytoplasm. The protein localises to the cytoskeleton. Its subcellular location is the spindle. Its function is as follows. Kinetochore- and microtubule-binding protein that plays a key role in spindle assembly. Znf207/BuGZ is mainly composed of disordered low-complexity regions and undergoes phase transition or coacervation to form temperature-dependent liquid droplets. Coacervation promotes microtubule bundling and concentrates tubulin, promoting microtubule polymerization and assembly of spindle and spindle matrix by concentrating its building blocks. This Xenopus laevis (African clawed frog) protein is BUB3-interacting and GLEBS motif-containing protein ZNF207.